The primary structure comprises 207 residues: Testis-expressed protein 35 (207 aa).

A coiled-coil region spans residues Arg43–Phe79.

Testis-specific. Expressed during spermatogenesis.

The protein resides in the nucleus. The chain is Testis-expressed protein 35 (Tex35) from Mus musculus (Mouse).